We begin with the raw amino-acid sequence, 905 residues long: Phosphatidylethanolamine N-methyltransferase (905 aa).

Composition is skewed to polar residues over residues 1 to 22 and 40 to 58; these read MTNQIPSASSAADFGSSKSTSV and DSNGLQQTNQIEQAESSLN. The tract at residues 1-73 is disordered; that stretch reads MTNQIPSASS…SEPERYGCTP (73 aa). Over 1 to 104 the chain is Lumenal; that stretch reads MTNQIPSASS…DPRFSKTPWD (104 aa). A helical membrane pass occupies residues 105 to 125; that stretch reads WIVISSILAQVLLFFMTTGAV. The Cytoplasmic segment spans residues 126–128; that stretch reads RRY. The chain crosses the membrane as a helical span at residues 129–149; the sequence is SMMLCFFFWRISYDAGIGFLL. Topologically, residues 150–209 are lumenal; sequence HMQSNHRKVVTWISDFGFFDKENHPKLYDLTKKQLISKMDSSYNYDTSPLEFNSWLVFRH. The chain crosses the membrane as a helical span at residues 210-230; sequence FVDLILMCDFCSYILMGLAWT. Residues 231 to 236 lie on the Cytoplasmic side of the membrane; that stretch reads CWPKVN. Residues 237–257 form a helical membrane-spanning segment; sequence IILQFLRIFGGIALIVFNYWV. Residues 258–268 lie on the Lumenal side of the membrane; the sequence is KMDAHRVVRDY. Residues 269–289 form a helical membrane-spanning segment; the sequence is AWYWGDFFFLLRSSLVFNGVF. Topologically, residues 290–313 are cytoplasmic; it reads ELAPHPMYSVGYAGYYGMSLLTGS. A helical transmembrane segment spans residues 314 to 334; sequence YAVLFASILAHAAQFGFLLFV. At 335–379 the chain is on the lumenal side; the sequence is ENPHIERTYGTDINHARLSPRGEDNEFELPPEHDLVGFVNFDFTR. Ser-353 carries the phosphoserine modification. The chain crosses the membrane as a helical span at residues 380-400; that stretch reads ISDVALLIIALYSIFIILLSS. The Cytoplasmic portion of the chain corresponds to 401-408; it reads NSHYSQFW. Residues 409–429 traverse the membrane as a helical segment; that stretch reads AIFQAFVWRFLHSIIHAFILF. Residues 430 to 456 are Lumenal-facing; sequence YQSKSKAWTKHFIRNGESAAYAWSQWK. A helical membrane pass occupies residues 457–479; the sequence is GLYNLTLNMSYISFVMAAWKLYH. At 480-493 the chain is on the cytoplasmic side; sequence LPSNWTYGLVSLRH. Residues 494-514 form a helical membrane-spanning segment; the sequence is ALGFGLIALHIYTSVSIYEDL. Over 515–552 the chain is Lumenal; sequence GQYGWFYGDFFLPSRSPKLVYQGIYRYVNNPERFLGCS. A helical transmembrane segment spans residues 553 to 573; the sequence is AYWGLALISSSAWIFLIAILA. The Cytoplasmic portion of the chain corresponds to 574–905; sequence QLSNLAIIRL…FDGPSGAKDD (332 aa).

The protein belongs to the class VI-like SAM-binding methyltransferase superfamily. CHO2 family.

The protein localises to the endoplasmic reticulum membrane. It catalyses the reaction a 1,2-diacyl-sn-glycero-3-phosphoethanolamine + S-adenosyl-L-methionine = a 1,2-diacyl-sn-glycero-3-phospho-N-methylethanolamine + S-adenosyl-L-homocysteine + H(+). It functions in the pathway phospholipid metabolism; phosphatidylcholine biosynthesis. Functionally, catalyzes the first step of the methylation pathway of phosphatidylcholine biosynthesis, the SAM-dependent methylation of phosphatidylethanolamine (PE) to phosphatidylmonomethylethanolamine (PMME). The chain is Phosphatidylethanolamine N-methyltransferase from Schizosaccharomyces pombe (strain 972 / ATCC 24843) (Fission yeast).